Reading from the N-terminus, the 56-residue chain is Large ribosomal subunit protein bL33 (56 aa).

It belongs to the bacterial ribosomal protein bL33 family.

In Rickettsia prowazekii (strain Madrid E), this protein is Large ribosomal subunit protein bL33 (rpmG).